A 215-amino-acid polypeptide reads, in one-letter code: Pyrrolidone-carboxylate peptidase (215 aa).

Active-site residues include Glu-80, Cys-143, and His-167.

The protein belongs to the peptidase C15 family. Homotetramer.

Its subcellular location is the cytoplasm. The enzyme catalyses Release of an N-terminal pyroglutamyl group from a polypeptide, the second amino acid generally not being Pro.. Functionally, removes 5-oxoproline from various penultimate amino acid residues except L-proline. In Bacillus cereus (strain AH820), this protein is Pyrrolidone-carboxylate peptidase.